Here is a 687-residue protein sequence, read N- to C-terminus: Transketolase 2 (687 aa).

His-47 contributes to the substrate binding site. Residues His-87 and 135-137 (GPL) contribute to the thiamine diphosphate site. Residue Asp-176 coordinates Mg(2+). Thiamine diphosphate-binding residues include Gly-177 and Asn-206. The Mg(2+) site is built by Asn-206 and Ile-208. Positions 282, 379, and 406 each coordinate substrate. His-282 is a binding site for thiamine diphosphate. Glu-432 (proton donor) is an active-site residue. Position 458 (Phe-458) interacts with thiamine diphosphate. Positions 482, 490, 494, and 541 each coordinate substrate.

Belongs to the transketolase family. Mg(2+) is required as a cofactor. Requires thiamine diphosphate as cofactor.

The enzyme catalyses D-sedoheptulose 7-phosphate + D-glyceraldehyde 3-phosphate = aldehydo-D-ribose 5-phosphate + D-xylulose 5-phosphate. Its activity is regulated as follows. Activity is increased sixfold following autotrophic growth on methanol compared with that of heterotrophically grown cells. In terms of biological role, catalyzes the transfer of a two-carbon ketol group from a ketose donor to an aldose acceptor, via a covalent intermediate with the cofactor thiamine pyrophosphate. The sequence is that of Transketolase 2 from Xanthobacter flavus.